An 88-amino-acid chain; its full sequence is Kunitz-type U15-theraphotoxin-Hhn1i (88 aa).

Residues 1–27 (MGTARFLRAVLLLSVLLMVTFPALLSA) form the signal peptide. The propeptide occupies 28-33 (EHHDGR). The BPTI/Kunitz inhibitor domain occupies 37 to 85 (CRLPSDSGDCLRFFEMRYFDGTTCTKFVYGGYGGNDNRFPTEKACMKRC). Cystine bridges form between Cys-37/Cys-85 and Cys-60/Cys-81.

This sequence belongs to the venom Kunitz-type family. 03 (sub-Kunitz) subfamily. In terms of tissue distribution, expressed by the venom gland.

Its subcellular location is the secreted. In terms of biological role, serine protease inhibitor that inhibits trypsin at a molar ratio of 1:1. In Cyriopagopus hainanus (Chinese bird spider), this protein is Kunitz-type U15-theraphotoxin-Hhn1i.